A 516-amino-acid polypeptide reads, in one-letter code: L-amino-acid oxidase (516 aa).

The first 18 residues, 1 to 18 (MNVFFMFSLLFLAALGSC), serve as a signal peptide directing secretion. A disulfide bond links Cys28 and Cys189. FAD is bound by residues 61–62 (MA), 81–82 (EA), Arg89, and 103–106 (GPMR). The substrate site is built by Arg106 and His239. Val279 contacts FAD. Residues Cys349 and Cys430 are joined by a disulfide bond. The N-linked (GlcNAc...) asparagine glycan is linked to Asn379. Position 390 (Tyr390) interacts with substrate. Residues Glu475 and 482–487 (GWIDST) each bind FAD. 482–483 (GW) contributes to the substrate binding site.

This sequence belongs to the flavin monoamine oxidase family. FIG1 subfamily. As to quaternary structure, homodimer; non-covalently linked. Requires FAD as cofactor. Expressed by the venom gland.

It localises to the secreted. It carries out the reaction an L-alpha-amino acid + O2 + H2O = a 2-oxocarboxylate + H2O2 + NH4(+). Catalyzes an oxidative deamination of predominantly hydrophobic and aromatic L-amino acids, thus producing hydrogen peroxide that may contribute to the diverse toxic effects of this enzyme. Exhibits diverse biological activities, such as hemolysis, edema, hemorrhage, apoptosis, antibacterial and antiparasitic activities, as well as regulation of platelet aggregation. Effects of snake L-amino oxidases on platelets are controversial, since they either induce aggregation or inhibit agonist-induced aggregation. These different effects are probably due to different experimental conditions. This is L-amino-acid oxidase from Crotalus adamanteus (Eastern diamondback rattlesnake).